Consider the following 429-residue polypeptide: Glutamyl-tRNA reductase (429 aa).

Residues 50-53, Ser108, 113-115, and Gln119 contribute to the substrate site; these read TCNR and EPQ. Cys51 functions as the Nucleophile in the catalytic mechanism. 188–193 contacts NADP(+); the sequence is GAGEMI.

The protein belongs to the glutamyl-tRNA reductase family. As to quaternary structure, homodimer.

It carries out the reaction (S)-4-amino-5-oxopentanoate + tRNA(Glu) + NADP(+) = L-glutamyl-tRNA(Glu) + NADPH + H(+). The protein operates within porphyrin-containing compound metabolism; protoporphyrin-IX biosynthesis; 5-aminolevulinate from L-glutamyl-tRNA(Glu): step 1/2. In terms of biological role, catalyzes the NADPH-dependent reduction of glutamyl-tRNA(Glu) to glutamate 1-semialdehyde (GSA). This is Glutamyl-tRNA reductase from Polaromonas naphthalenivorans (strain CJ2).